A 339-amino-acid chain; its full sequence is Dihydroorotate dehydrogenase (quinone) (339 aa).

FMN contacts are provided by residues 64–68 and T88; that span reads AGADK. K68 is a substrate binding site. 113–117 serves as a coordination point for substrate; the sequence is NRNGF. N141 and N174 together coordinate FMN. A substrate-binding site is contributed by N174. The Nucleophile role is filled by S177. N179 is a binding site for substrate. FMN contacts are provided by K219 and T247. 248-249 contacts substrate; that stretch reads NT. Residues G270, G299, and 320-321 contribute to the FMN site; that span reads YS.

It belongs to the dihydroorotate dehydrogenase family. Type 2 subfamily. As to quaternary structure, monomer. Requires FMN as cofactor.

The protein resides in the cell membrane. The catalysed reaction is (S)-dihydroorotate + a quinone = orotate + a quinol. Its pathway is pyrimidine metabolism; UMP biosynthesis via de novo pathway; orotate from (S)-dihydroorotate (quinone route): step 1/1. In terms of biological role, catalyzes the conversion of dihydroorotate to orotate with quinone as electron acceptor. This chain is Dihydroorotate dehydrogenase (quinone) (pyrD), found in Haemophilus influenzae (strain ATCC 51907 / DSM 11121 / KW20 / Rd).